A 107-amino-acid polypeptide reads, in one-letter code: MHHALIVARIARSPAQDIAGVFAASDPGELRHLVGVTQRSLFQFGDVYMHFIEAGAGPGPRIAKVTGHPEFVDISRKLEAYVSPYDPQTWRSPRDAMGRCFYHWERD.

The protein operates within antibiotic biosynthesis; curamycin biosynthesis. In Streptomyces cyaneus (Streptomyces curacoi), this protein is Polyketide synthase CurG (curG).